Consider the following 338-residue polypeptide: Ketol-acid reductoisomerase (NADP(+)) (338 aa).

Positions 1 to 181 (MKVFYDKDAD…GGGRAGIIET (181 aa)) constitute a KARI N-terminal Rossmann domain. Residues 24–27 (YGSQ), arginine 47, and serine 52 contribute to the NADP(+) site. Histidine 107 is a catalytic residue. Glycine 133 is an NADP(+) binding site. The 146-residue stretch at 182 to 327 (NFREETETDL…AKLRAMMPWI (146 aa)) folds into the KARI C-terminal knotted domain. Mg(2+) contacts are provided by aspartate 190, glutamate 194, glutamate 226, and glutamate 230. Residue serine 251 coordinates substrate.

It belongs to the ketol-acid reductoisomerase family. Mg(2+) serves as cofactor.

It catalyses the reaction (2R)-2,3-dihydroxy-3-methylbutanoate + NADP(+) = (2S)-2-acetolactate + NADPH + H(+). It carries out the reaction (2R,3R)-2,3-dihydroxy-3-methylpentanoate + NADP(+) = (S)-2-ethyl-2-hydroxy-3-oxobutanoate + NADPH + H(+). It functions in the pathway amino-acid biosynthesis; L-isoleucine biosynthesis; L-isoleucine from 2-oxobutanoate: step 2/4. It participates in amino-acid biosynthesis; L-valine biosynthesis; L-valine from pyruvate: step 2/4. Involved in the biosynthesis of branched-chain amino acids (BCAA). Catalyzes an alkyl-migration followed by a ketol-acid reduction of (S)-2-acetolactate (S2AL) to yield (R)-2,3-dihydroxy-isovalerate. In the isomerase reaction, S2AL is rearranged via a Mg-dependent methyl migration to produce 3-hydroxy-3-methyl-2-ketobutyrate (HMKB). In the reductase reaction, this 2-ketoacid undergoes a metal-dependent reduction by NADPH to yield (R)-2,3-dihydroxy-isovalerate. This chain is Ketol-acid reductoisomerase (NADP(+)), found in Cupriavidus necator (strain ATCC 17699 / DSM 428 / KCTC 22496 / NCIMB 10442 / H16 / Stanier 337) (Ralstonia eutropha).